We begin with the raw amino-acid sequence, 104 residues long: U20-lycotoxin-Ls1d (104 aa).

An N-terminal signal peptide occupies residues 1–30 (MFSTSDQVSKMNSRILSALLILGIATCVIA). Residues 31–76 (GGFCPKSRHPQCNLSYKINDCCAQSDCRVGSVCCVEGCGNVCRAES) enclose the WAP domain. Intrachain disulfides connect Cys-34–Cys-64, Cys-42–Cys-68, Cys-51–Cys-63, Cys-52–Cys-90, and Cys-57–Cys-72.

The protein belongs to the venom protein 11 family. 02 (wap-2) subfamily. Contains 5 disulfide bonds. As to expression, expressed by the venom gland.

It is found in the secreted. In terms of biological role, has antibacterial activity. The sequence is that of U20-lycotoxin-Ls1d from Lycosa singoriensis (Wolf spider).